A 310-amino-acid polypeptide reads, in one-letter code: Thioredoxin reductase (310 aa).

Residue 34 to 41 (NGMQPGGQ) participates in FAD binding. Cys-135 and Cys-138 form a disulfide bridge. 281-290 (DVQDKIYRQA) serves as a coordination point for FAD.

This sequence belongs to the class-II pyridine nucleotide-disulfide oxidoreductase family. Homodimer. It depends on FAD as a cofactor.

It is found in the cytoplasm. The enzyme catalyses [thioredoxin]-dithiol + NADP(+) = [thioredoxin]-disulfide + NADPH + H(+). This is Thioredoxin reductase (trxB) from Rickettsia typhi (strain ATCC VR-144 / Wilmington).